We begin with the raw amino-acid sequence, 102 residues long: uncharacterized protein (102 aa).

This is an uncharacterized protein from Homo sapiens (Human).